The sequence spans 90 residues: Small ribosomal subunit protein uS15 (90 aa).

This sequence belongs to the universal ribosomal protein uS15 family. As to quaternary structure, part of the 30S ribosomal subunit. Forms a bridge to the 50S subunit in the 70S ribosome, contacting the 23S rRNA.

Its function is as follows. One of the primary rRNA binding proteins, it binds directly to 16S rRNA where it helps nucleate assembly of the platform of the 30S subunit by binding and bridging several RNA helices of the 16S rRNA. In terms of biological role, forms an intersubunit bridge (bridge B4) with the 23S rRNA of the 50S subunit in the ribosome. This chain is Small ribosomal subunit protein uS15, found in Helicobacter pylori (strain Shi470).